Here is a 422-residue protein sequence, read N- to C-terminus: 3-phosphoshikimate 1-carboxyvinyltransferase (422 aa).

3-phosphoshikimate is bound by residues K20, S21, and R25. Residue K20 participates in phosphoenolpyruvate binding. G90 and R118 together coordinate phosphoenolpyruvate. 3-phosphoshikimate-binding residues include S161, S162, Q163, S189, D305, and K332. A phosphoenolpyruvate-binding site is contributed by Q163. D305 functions as the Proton acceptor in the catalytic mechanism. Phosphoenolpyruvate is bound by residues R336 and R378.

It belongs to the EPSP synthase family. As to quaternary structure, monomer.

Its subcellular location is the cytoplasm. It carries out the reaction 3-phosphoshikimate + phosphoenolpyruvate = 5-O-(1-carboxyvinyl)-3-phosphoshikimate + phosphate. It functions in the pathway metabolic intermediate biosynthesis; chorismate biosynthesis. Catalyzes the transfer of the enolpyruvyl moiety of phosphoenolpyruvate (PEP) to the 5-hydroxyl of shikimate-3-phosphate (S3P) to produce enolpyruvyl shikimate-3-phosphate and inorganic phosphate. In Nitrosopumilus maritimus (strain SCM1), this protein is 3-phosphoshikimate 1-carboxyvinyltransferase.